The primary structure comprises 262 residues: Pyridoxine 5'-phosphate synthase (262 aa).

N6 contacts 3-amino-2-oxopropyl phosphate. 8 to 9 (DH) lines the 1-deoxy-D-xylulose 5-phosphate pocket. R17 contacts 3-amino-2-oxopropyl phosphate. Residue H43 is the Proton acceptor of the active site. R45 and H50 together coordinate 1-deoxy-D-xylulose 5-phosphate. E70 acts as the Proton acceptor in catalysis. T102 is a 1-deoxy-D-xylulose 5-phosphate binding site. Residue H215 is the Proton donor of the active site. Residues G216 and 237–238 (GH) contribute to the 3-amino-2-oxopropyl phosphate site.

It belongs to the PNP synthase family. In terms of assembly, homooctamer; tetramer of dimers.

It localises to the cytoplasm. The catalysed reaction is 3-amino-2-oxopropyl phosphate + 1-deoxy-D-xylulose 5-phosphate = pyridoxine 5'-phosphate + phosphate + 2 H2O + H(+). The protein operates within cofactor biosynthesis; pyridoxine 5'-phosphate biosynthesis; pyridoxine 5'-phosphate from D-erythrose 4-phosphate: step 5/5. Catalyzes the complicated ring closure reaction between the two acyclic compounds 1-deoxy-D-xylulose-5-phosphate (DXP) and 3-amino-2-oxopropyl phosphate (1-amino-acetone-3-phosphate or AAP) to form pyridoxine 5'-phosphate (PNP) and inorganic phosphate. The chain is Pyridoxine 5'-phosphate synthase from Helicobacter pylori (strain J99 / ATCC 700824) (Campylobacter pylori J99).